A 402-amino-acid polypeptide reads, in one-letter code: Endo-polygalacturonase (402 aa).

An N-terminal signal peptide occupies residues 1 to 23; the sequence is MEYQSGKRVLSLSLGLIGLFSAS. Catalysis depends on aspartate 249, which acts as the Proton donor. The active site involves histidine 277.

Belongs to the glycosyl hydrolase 28 family. As to quaternary structure, monomer.

The protein localises to the secreted. The catalysed reaction is (1,4-alpha-D-galacturonosyl)n+m + H2O = (1,4-alpha-D-galacturonosyl)n + (1,4-alpha-D-galacturonosyl)m.. Its function is as follows. Involved in maceration and soft-rotting of plant tissue. In Pectobacterium carotovorum subsp. carotovorum (Erwinia carotovora subsp. carotovora), this protein is Endo-polygalacturonase (peh).